We begin with the raw amino-acid sequence, 347 residues long: Probable nitronate monooxygenase (347 aa).

FMN is bound by residues Asn-69, Gln-171, Gly-176, Gly-213, and 232–235 (QIGS).

It belongs to the nitronate monooxygenase family. NMO class I subfamily. Requires FMN as cofactor.

The catalysed reaction is 3 propionate 3-nitronate + 3 O2 + H2O = 3 3-oxopropanoate + 2 nitrate + nitrite + H2O2 + 3 H(+). In terms of biological role, nitronate monooxygenase that uses molecular oxygen to catalyze the oxidative denitrification of alkyl nitronates. Acts on propionate 3-nitronate (P3N), the presumed physiological substrate. Probably functions in the detoxification of P3N, a metabolic poison produced by plants and fungi as a defense mechanism. The sequence is that of Probable nitronate monooxygenase (yrpB) from Bacillus subtilis (strain 168).